Reading from the N-terminus, the 395-residue chain is Trans-2-enoyl-CoA reductase [NADH] (395 aa).

NAD(+) is bound by residues 47 to 52 (GASTGY), 73 to 74 (FE), 110 to 111 (DA), and 138 to 139 (LA). Position 224 (Y224) interacts with substrate. The Proton donor role is filled by Y234. NAD(+) contacts are provided by residues K243 and 272 to 274 (VVT).

It belongs to the TER reductase family. Monomer.

The catalysed reaction is a 2,3-saturated acyl-CoA + NAD(+) = a (2E)-enoyl-CoA + NADH + H(+). The protein operates within lipid metabolism; fatty acid biosynthesis. Involved in the fatty acid synthesis (FAS II). Catalyzes the reduction of a carbon-carbon double bond in an enoyl moiety that is covalently linked to a coenzyme A (CoA). This Ruminiclostridium cellulolyticum (strain ATCC 35319 / DSM 5812 / JCM 6584 / H10) (Clostridium cellulolyticum) protein is Trans-2-enoyl-CoA reductase [NADH].